The sequence spans 132 residues: Small ribosomal subunit protein uS8 (132 aa).

This sequence belongs to the universal ribosomal protein uS8 family. In terms of assembly, part of the 30S ribosomal subunit. Contacts proteins S5 and S12.

In terms of biological role, one of the primary rRNA binding proteins, it binds directly to 16S rRNA central domain where it helps coordinate assembly of the platform of the 30S subunit. The sequence is that of Small ribosomal subunit protein uS8 from Brevibacillus brevis (strain 47 / JCM 6285 / NBRC 100599).